The chain runs to 366 residues: Ribosomal RNA small subunit methyltransferase H 1 (366 aa).

Residues 1 to 46 (MADQNINKNEKVLTGQPTENQEPVHKRRERYKGTHPKTFKEKYKER) form a disordered region. Residues 25–37 (HKRRERYKGTHPK) show a composition bias toward basic residues. S-adenosyl-L-methionine contacts are provided by residues 97–99 (GGH), Asp117, Phe147, Asp166, and Gln173.

This sequence belongs to the methyltransferase superfamily. RsmH family.

It localises to the cytoplasm. It carries out the reaction cytidine(1402) in 16S rRNA + S-adenosyl-L-methionine = N(4)-methylcytidine(1402) in 16S rRNA + S-adenosyl-L-homocysteine + H(+). Functionally, specifically methylates the N4 position of cytidine in position 1402 (C1402) of 16S rRNA. In Lachnoclostridium phytofermentans (strain ATCC 700394 / DSM 18823 / ISDg) (Clostridium phytofermentans), this protein is Ribosomal RNA small subunit methyltransferase H 1.